A 268-amino-acid chain; its full sequence is Ribosomal RNA small subunit methyltransferase A (268 aa).

Residues N16, L18, G43, E64, D89, and N110 each coordinate S-adenosyl-L-methionine.

The protein belongs to the class I-like SAM-binding methyltransferase superfamily. rRNA adenine N(6)-methyltransferase family. RsmA subfamily.

It localises to the cytoplasm. It catalyses the reaction adenosine(1518)/adenosine(1519) in 16S rRNA + 4 S-adenosyl-L-methionine = N(6)-dimethyladenosine(1518)/N(6)-dimethyladenosine(1519) in 16S rRNA + 4 S-adenosyl-L-homocysteine + 4 H(+). Specifically dimethylates two adjacent adenosines (A1518 and A1519) in the loop of a conserved hairpin near the 3'-end of 16S rRNA in the 30S particle. May play a critical role in biogenesis of 30S subunits. The polypeptide is Ribosomal RNA small subunit methyltransferase A (Pseudomonas aeruginosa (strain ATCC 15692 / DSM 22644 / CIP 104116 / JCM 14847 / LMG 12228 / 1C / PRS 101 / PAO1)).